A 426-amino-acid chain; its full sequence is Serine--tRNA ligase (426 aa).

Residues 36–66 (KRKHLQERTQDLQSQRNTISKEIGQKKAKGE) are disordered. The segment covering 46 to 55 (DLQSQRNTIS) has biased composition (polar residues). Position 233–235 (233–235 (TAE)) interacts with L-serine. 264–266 (RSE) is a binding site for ATP. An L-serine-binding site is contributed by Glu287. 351–354 (EISS) is a binding site for ATP. L-serine is bound at residue Ser387.

Belongs to the class-II aminoacyl-tRNA synthetase family. Type-1 seryl-tRNA synthetase subfamily. In terms of assembly, homodimer. The tRNA molecule binds across the dimer.

The protein resides in the cytoplasm. It carries out the reaction tRNA(Ser) + L-serine + ATP = L-seryl-tRNA(Ser) + AMP + diphosphate + H(+). It catalyses the reaction tRNA(Sec) + L-serine + ATP = L-seryl-tRNA(Sec) + AMP + diphosphate + H(+). It participates in aminoacyl-tRNA biosynthesis; selenocysteinyl-tRNA(Sec) biosynthesis; L-seryl-tRNA(Sec) from L-serine and tRNA(Sec): step 1/1. Its function is as follows. Catalyzes the attachment of serine to tRNA(Ser). Is also able to aminoacylate tRNA(Sec) with serine, to form the misacylated tRNA L-seryl-tRNA(Sec), which will be further converted into selenocysteinyl-tRNA(Sec). This is Serine--tRNA ligase from Francisella tularensis subsp. holarctica (strain FTNF002-00 / FTA).